The chain runs to 107 residues: Guanylate cyclase activator 2B (107 aa).

Residues 1 to 21 (MSGSQLWAAVVVLLLLQSAQG) form the signal peptide. Positions 22 to 92 (VYIKYHGFQV…STFKALRTIA (71 aa)) are excised as a propeptide. Intrachain disulfides connect C63–C76, C96–C104, and C99–C107.

This sequence belongs to the guanylin family.

It is found in the secreted. In terms of biological role, endogenous activator of intestinal guanylate cyclase. It stimulates this enzyme through the same receptor binding region as the heat-stable enterotoxins. May be a potent physiological regulator of intestinal fluid and electrolyte transport. May be an autocrine/paracrine regulator of intestinal salt and water transport. This is Guanylate cyclase activator 2B (GUCA2B) from Notomys alexis (Spinifex hopping mouse).